Consider the following 105-residue polypeptide: Putative ferredoxin-3 (105 aa).

2 consecutive 4Fe-4S ferredoxin-type domains span residues 17 to 46 (YLTA…LHGI) and 70 to 100 (TIMV…HVAA). Cysteine 26, cysteine 29, cysteine 32, cysteine 36, cysteine 80, cysteine 83, cysteine 86, and cysteine 90 together coordinate [4Fe-4S] cluster.

Requires [4Fe-4S] cluster as cofactor.

Ferredoxins are iron-sulfur proteins that transfer electrons in a wide variety of metabolic reactions. The sequence is that of Putative ferredoxin-3 (fdxB) from Sinorhizobium fredii (strain NBRC 101917 / NGR234).